Consider the following 864-residue polypeptide: Arf-GAP with GTPase, ANK repeat and PH domain-containing protein 1 (864 aa).

Positions 66–276 (SRSVPELKVG…QTSNGGGSLS (211 aa)) are small GTPase-like. In terms of domain architecture, GLD spans 67–241 (RSVPELKVGI…TRKKQQLSIG (175 aa)). GTP-binding positions include 78 to 85 (GNLASGKS), 122 to 126 (IRDEG), and 178 to 181 (TQDA). Disordered stretches follow at residues 266–343 (SQTS…IGSG), 405–455 (VPGK…QMAS), and 499–549 (TGLG…LSST). Residues 275-289 (LSDYSSSVPSTPSTS) are compositionally biased toward low complexity. Residues 322–337 (KGSDPDKDKKGLESRA) are compositionally biased toward basic and acidic residues. In terms of domain architecture, PH spans 346-591 (IPIKQGMLLK…WVQAIESQIL (246 aa)). The segment covering 413-428 (ATSSCAPVASPKTNGL) has biased composition (polar residues). A compositionally biased stretch (low complexity) spans 507–517 (SSPSISSTTSP). Positions 527 to 537 (ANRKKHRRKKS) are enriched in basic residues. Polar residues predominate over residues 538-549 (TSNFKVDGLSST). One can recognise an Arf-GAP domain in the interval 612–732 (ALALQSIRNL…LFLSPLPCRD (121 aa)). A C4-type zinc finger spans residues 627 to 650 (CVDCDAQSPDWASLNLGALMCIEC). ANK repeat units lie at residues 771-800 (DRRT…DVMA) and 804-833 (HGNT…PDEQ). The segment covering 845-854 (KNNRNNNSNA) has biased composition (low complexity). The tract at residues 845 to 864 (KNNRNNNSNAGGSGLMPTLI) is disordered.

The protein belongs to the centaurin gamma-like family. In terms of assembly, homodimer. Interacts with several subunits of the AP-3 protein complex.

The protein localises to the cytoplasm. In terms of biological role, GTPase-activating protein. Directly and specifically regulates the adapter protein 3 (AP-3)-dependent trafficking of proteins in the endosomal-lysosomal system. The sequence is that of Arf-GAP with GTPase, ANK repeat and PH domain-containing protein 1 (agap1) from Xenopus laevis (African clawed frog).